Reading from the N-terminus, the 602-residue chain is MYDYAFVHLKFTVPAAVLLTAIAYPILNRIHLIQTGFLVVVAFTAALPWDAYLIKHKVWSYPPEAIVGPRLLGIPFEELFFFVIQTYITALVYILFNKPVLHALHLNNQQNPPAWMRVVKVTGQVVLVALSVWGWNAAQVHQETSYLGLILVWACPFLLAIWTLAGRFILSLPWYATVLPMFLPTFYLWAVDEFALHRGTWSIGSGTKLDFCLFGKLDIEEATFFLVTNMLIVGGMAAFDQYLAVIYAFPTLFPKVNRYPTTHMLLQSRLINTSRYDLERIEGLREAVERLRLKSRSFYLANSLFSGRLRIDLILLYSFCRLADDLVDDAKSRREVLSWTAKLNHFLDLHYKDADATEDPKKKAERIDAYIKTAFPPCAYQALHLLPTHILPPKPLYDLIKGFEMDSQFTFHGTSDSTDLQYPIADDKDLENYAIYVAGTVGELCIALIIYHCLPDMSDTQKRELETAACRMGIALQYVNIARDIVVDARIGRVYLPTTWLKKEGLTHKMVLENPEGPEVIERMRRRLLENAFELYGGARPEMQRIPSEARGPMIGAVENYMAIGRVLRERKEGTVFVRMEGRATVPKRRRLSTLLRALYEQ.

The interval 1–241 (MYDYAFVHLK…IVGGMAAFDQ (241 aa)) is lycopene beta-cyclase. Transmembrane regions (helical) follow at residues 6–26 (FVHL…AYPI), 30–50 (IHLI…LPWD), 76–96 (FEEL…YILF), 118–138 (VVKV…WNAA), 146–166 (YLGL…TLAG), 168–188 (FILS…TFYL), and 230–250 (MLIV…YAFP). Positions 248–602 (AFPTLFPKVN…STLLRALYEQ (355 aa)) are phytoene synthase.

It in the N-terminal section; belongs to the lycopene beta-cyclase family. In the C-terminal section; belongs to the phytoene/squalene synthase family.

It is found in the membrane. The catalysed reaction is all-trans-lycopene = gamma-carotene. It catalyses the reaction gamma-carotene = all-trans-beta-carotene. It carries out the reaction 2 (2E,6E,10E)-geranylgeranyl diphosphate = 15-cis-phytoene + 2 diphosphate. The protein operates within carotenoid biosynthesis; beta-carotene biosynthesis. Its pathway is carotenoid biosynthesis; phytoene biosynthesis; all-trans-phytoene from geranylgeranyl diphosphate: step 1/1. In terms of biological role, bifunctional enzyme that catalyzes the reactions from geranylgeranyl diphosphate to phytoene (phytoene synthase) and from lycopene to beta-carotene via the intermediate gamma-carotene and from 3,4-didehydrolycopene to torulene (lycopene cyclase). Torulene is further processed to the acidic carotenoid neurosporaxanthin. The cyclase preferentially catalyzes single cyclizations at only one end of the substrate to produce monocyclic carotenoids. Neurosporaxanthin is synthesized from geranyl-geranyl pyrophosphate (GGPP) through several enzymatic activities. Phytoene synthase activity performed by the bifunctional enzyme al-2 first produces phytoene from geranyl-geranyl pyrophosphate (GGPP). The phytoene dehydrogenase al-1 then introduces 5 desaturations to lead to 3,4-didehydrolycopene via the intermediates phytofluene, zeta-carotene, neurosporene and lycopene. Al-2 cyclase activity then converts 3,4-didehydrolycopene into torulene. Al-2 can also convet lycopene into gamma-carotene which in turn is converted to beta-carotene by an additional al-2 cyclization reaction. Torulene is the substrate of the dioxidase cao-2 that breaks the molecule, removing five carbon atoms to yield beta-apo-4'-carotenal, whereas the aldehyde dehydrogenase ylo-1 mediates the last step by converting beta-apo-4'-carotenal into neurosporaxanthin. The sequence is that of Bifunctional lycopene cyclase/phytoene synthase from Neurospora crassa (strain ATCC 24698 / 74-OR23-1A / CBS 708.71 / DSM 1257 / FGSC 987).